Consider the following 298-residue polypeptide: Probable tRNA(His) guanylyltransferase (298 aa).

Mg(2+)-binding residues include Asp58, Gly59, and Asp105. GTP-binding positions include 58 to 63 and 104 to 105; these read DGRNFH and SD.

This sequence belongs to the tRNA(His) guanylyltransferase family. Homotetramer. Interacts with MFN1 and MFN2; functions as a guanyl-nucleotide exchange factor/GEF for MFN2 and also probably MFN1. Mg(2+) serves as cofactor. As to expression, expressed in many tissues.

The protein resides in the cytoplasm. It is found in the mitochondrion outer membrane. It carries out the reaction a 5'-end ribonucleotide-tRNA(His) + GTP + ATP + H2O = a 5'-end phospho-guanosine-ribonucleotide-tRNA(His) + AMP + 2 diphosphate + H(+). In terms of biological role, adds a GMP to the 5'-end of tRNA(His) after transcription and RNase P cleavage. This step is essential for proper recognition of the tRNA and for the fidelity of protein synthesis. Also functions as a guanyl-nucleotide exchange factor/GEF for the MFN1 and MFN2 mitofusins thereby regulating mitochondrial fusion. By regulating both mitochondrial dynamics and bioenergetic function, it contributes to cell survival following oxidative stress. The chain is Probable tRNA(His) guanylyltransferase (THG1L) from Homo sapiens (Human).